We begin with the raw amino-acid sequence, 729 residues long: MAKSVVIAEKPSVARDIARVLKCDKKGNGYLEGSKYIVTWALGHLVTLADPESYDVKYKKWNLEDLPMLPERLKLTVIKQTGKQFNAVKSQLLRKDVNEIIVATDAGREGELVARWIIDKVRINKPIKRLWISSVTDKAIKDGFANLKPGKAYDNLYASAVARSEADWYIGLNATRALTTRFNAQLNCGRVQTPTVAMIANREDEIKNFKAQTYYGIEAQTTNQLKLTWQDANGNSRSFNKEKIDGIVKGLDKHNATVLEIDKKQKKSFSPGLYDLTELQRDANKKFGYSAKETLNIMQKLYEQHKVLTYPRTDSRYISSDIVGTLPERLKACGVGEYRPLAHKVLQKPIKANKSFVDDSKVSDHHAIIPTEGYVNFSAFTDKERKIYDLVVKRFLAVLFPAFEYEQLTLRTKIGNETFIARGKTILHAGWKEVYENRFEDDDVTDEVKEQLLPRIEKGDTLTVKLIMQTSGQTKAPARFNEATLLSAMENPTKYMDTQNKQLADTLKSTGGLGTVATRADIIDKLFNSFLIEKRGKDIHITSKGRQLLDLVPEELKSPTLTGEWEQKLEAIAKGKLKKEVFISEMKNYTKEIVSEIKSSDKKYKHDNISTKSCPDCGKPMLEVNGKKGKMLVCQDRECGHRKNVSRTTNARCPQCKKKLELRGEGAGQIFACKCGYREKLSTFQERRKKESGNKADKRDVQKYMKQQKKEEEPLNNPFAEALKKLKFD.

The Toprim domain maps to 3 to 136; that stretch reads KSVVIAEKPS…IKRLWISSVT (134 aa). Positions 9 and 105 each coordinate Mg(2+). The 442-residue stretch at 153–594 folds into the Topo IA-type catalytic domain; it reads YDNLYASAVA…EMKNYTKEIV (442 aa). Residues 187–192 are interaction with DNA; sequence NCGRVQ. Tyr310 serves as the catalytic O-(5'-phospho-DNA)-tyrosine intermediate. Over residues 686–713 the composition is skewed to basic and acidic residues; the sequence is ERRKKESGNKADKRDVQKYMKQQKKEEE. Positions 686–718 are disordered; the sequence is ERRKKESGNKADKRDVQKYMKQQKKEEEPLNNP.

This sequence belongs to the type IA topoisomerase family. Requires Mg(2+) as cofactor.

The catalysed reaction is ATP-independent breakage of single-stranded DNA, followed by passage and rejoining.. In terms of biological role, releases the supercoiling and torsional tension of DNA, which is introduced during the DNA replication and transcription, by transiently cleaving and rejoining one strand of the DNA duplex. Introduces a single-strand break via transesterification at a target site in duplex DNA. The scissile phosphodiester is attacked by the catalytic tyrosine of the enzyme, resulting in the formation of a DNA-(5'-phosphotyrosyl)-enzyme intermediate and the expulsion of a 3'-OH DNA strand. The free DNA strand then undergoes passage around the unbroken strand, thus removing DNA supercoils. Finally, in the religation step, the DNA 3'-OH attacks the covalent intermediate to expel the active-site tyrosine and restore the DNA phosphodiester backbone. The protein is DNA topoisomerase 3 of Bacillus cereus (strain ZK / E33L).